A 395-amino-acid chain; its full sequence is Endophilin-B2 (395 aa).

Methionine 1 bears the N-acetylmethionine mark. Residues 1–27 are membrane-binding amphipathic helix; sequence MDFNMKKLASDAGIFFTRAVQFTEEKF. Phosphoserine is present on serine 10. Positions 24–287 constitute a BAR domain; it reads EEKFGQAEKT…LGRFPGTFVG (264 aa). Coiled coils occupy residues 116 to 132 and 206 to 240; these read IKVAEAEKHLGAAERDF and ASALWNDEVDKAEQELRVAQTEFDRQAEVTRLLLE. Positions 335–395 constitute an SH3 domain; that stretch reads SGTRKARVLY…VPVTYLELLS (61 aa). Serine 395 is modified (phosphoserine).

This sequence belongs to the endophilin family. As to quaternary structure, homodimer, and heterodimer with SH3GLB1.

The protein resides in the cytoplasm. In Bos taurus (Bovine), this protein is Endophilin-B2 (SH3GLB2).